The sequence spans 272 residues: MTLQEKIMQELNVKPSIEPKQEIEKRVGFLKSYLKKTGAKGFVLGISGGQDSTLAGRLAQLAVEELREEGIQAEFIAVRLPYGVQQDEDDAQLALKFIQPDKSFAFDIASTVGSFAAQYQSVTGEALADFHKGNVKARVRMITQYAIGGQNQLLVIGTDHAAEAVTGFFTKYGDGGADLLPLTGLTKRQGRSLLEELGAPERLYTKSPTADLLDEKPQQSDETELGLTYDNIDDYLEGKAVSSEVAEAIEKRYKASEHKRQVPASMFDDWWK.

45 to 52 (GISGGQDS) contacts ATP. Position 51 (D51) interacts with Mg(2+). Residue R138 participates in deamido-NAD(+) binding. T158 contacts ATP. Residue E163 coordinates Mg(2+). Positions 171 and 178 each coordinate deamido-NAD(+). Residues K187 and T209 each coordinate ATP. A deamido-NAD(+)-binding site is contributed by 258-259 (HK).

This sequence belongs to the NAD synthetase family. In terms of assembly, homodimer.

It catalyses the reaction deamido-NAD(+) + NH4(+) + ATP = AMP + diphosphate + NAD(+) + H(+). It participates in cofactor biosynthesis; NAD(+) biosynthesis; NAD(+) from deamido-NAD(+) (ammonia route): step 1/1. Functionally, catalyzes the ATP-dependent amidation of deamido-NAD to form NAD. Uses ammonia as a nitrogen source. The polypeptide is NH(3)-dependent NAD(+) synthetase (Bacillus licheniformis (strain ATCC 14580 / DSM 13 / JCM 2505 / CCUG 7422 / NBRC 12200 / NCIMB 9375 / NCTC 10341 / NRRL NRS-1264 / Gibson 46)).